Reading from the N-terminus, the 807-residue chain is Potassium transporter 9 (807 aa).

The Cytoplasmic portion of the chain corresponds to 1–59 (MAERVEASSVPEGENTIEEREVGAMWELEQKLDQPMDEEANKLNNMYREKGLSMLMLLR). Residues 60-80 (LSFQSLGIVYGDLGTSPLYVF) form a helical membrane-spanning segment. Residues 81–96 (YNTFPDGIDDSEDVIG) lie on the Extracellular side of the membrane. A helical transmembrane segment spans residues 97–117 (ALSLIIYSLLLIPLIKYVFIV). Residues 118-185 (CKANDNGQGG…EGKEWRKRAL (68 aa)) are Cytoplasmic-facing. A helical transmembrane segment spans residues 186-206 (LVVVLLGTCMMIGDGILTPAI). At 207-225 (SVLSATGGIKVNNPKMSGD) the chain is on the extracellular side. Residues 226-246 (IVVLVAIVILIGLFSMQHYGT) form a helical membrane-spanning segment. At 247 to 248 (DK) the chain is on the cytoplasmic side. The helical transmembrane segment at 249-269 (VGWLFAPIVLIWFLFIGATGM) threads the bilayer. The Extracellular segment spans residues 270–299 (YNICKYDTSVLKAFSPTYIYLYFKRRGRDG). The helical transmembrane segment at 300 to 320 (WISLGGILLSITGTEALYADI) threads the bilayer. Residues 321-322 (AY) are Cytoplasmic-facing. A helical transmembrane segment spans residues 323 to 343 (FPLLAIQLAFTFFVFPCLLLA). Topologically, residues 344–369 (YCGQAAYLVIHKEHYQDAFYASIPDS) are extracellular. A helical transmembrane segment spans residues 370 to 390 (VYWPMFIVATGAAIVGSQATI). The Cytoplasmic segment spans residues 391-417 (SGTYSIVKQAVAHGCFPRVKIVHTSKK). The helical transmembrane segment at 418–438 (FLGQIYCPDINWILMLGCIAV) threads the bilayer. Topologically, residues 439-454 (TASFKKQSQIGNAYGT) are extracellular. A helical membrane pass occupies residues 455 to 475 (AVVLVMLVTTLLMVLIMLLVW). Topologically, residues 476 to 481 (HCHWIL) are cytoplasmic. A helical membrane pass occupies residues 482 to 502 (VLIFTFLSFFVELSYFSAVIF). At 503 to 507 (KIDEG) the chain is on the extracellular side. A helical membrane pass occupies residues 508 to 528 (GWVPLIIAAISLLVMSVWHYA). The Cytoplasmic portion of the chain corresponds to 529 to 807 (TVKKYEFEMH…LLNVGQVFYV (279 aa)).

The protein belongs to the HAK/KUP transporter (TC 2.A.72.3) family.

Its subcellular location is the cell membrane. In terms of biological role, putative potassium transporter. This Arabidopsis thaliana (Mouse-ear cress) protein is Potassium transporter 9 (POT9).